Consider the following 223-residue polypeptide: Cytidylate kinase (223 aa).

Residue 12–20 (GPSGVGKGT) participates in ATP binding.

The protein belongs to the cytidylate kinase family. Type 1 subfamily.

The protein localises to the cytoplasm. It catalyses the reaction CMP + ATP = CDP + ADP. It carries out the reaction dCMP + ATP = dCDP + ADP. This chain is Cytidylate kinase, found in Xylella fastidiosa (strain 9a5c).